The chain runs to 86 residues: Small ribosomal subunit protein bS20 (86 aa).

Residues 1-27 (MANNKSAKKRAIQAEKRRQHNASRRSM) form a disordered region.

It belongs to the bacterial ribosomal protein bS20 family.

Binds directly to 16S ribosomal RNA. This is Small ribosomal subunit protein bS20 from Vibrio vulnificus (strain CMCP6).